Here is a 180-residue protein sequence, read N- to C-terminus: Pro-glucagon (180 aa).

The N-terminal stretch at 1 to 20 (MKSIYFVAGLFVMLVQGSWQ) is a signal peptide. The interval 23–56 (LQDTEEKPRSFSTSQTDLLDDPDQMNEDKRHSQG) is disordered. S54 is modified (phosphoserine). Positions 84-89 (NRNEIA) are excised as a propeptide. Phosphoserine occurs at positions 105 and 108. Residue R127 is modified to Arginine amide. Residues 131 to 145 (DFPEEVTIVEELRRR) constitute a propeptide that is removed on maturation. S150 and S152 each carry phosphoserine.

The protein belongs to the glucagon family. In terms of processing, proglucagon is post-translationally processed in a tissue-specific manner in pancreatic A cells and intestinal L cells. In pancreatic A cells, the major bioactive hormone is glucagon cleaved by PCSK2/PC2. In the intestinal L cells PCSK1/PC1 liberates GLP-1, GLP-2, glicentin and oxyntomodulin. GLP-1 is further N-terminally truncated by post-translational processing in the intestinal L cells resulting in GLP-1(7-37) GLP-1-(7-36)amide. The C-terminal amidation is neither important for the metabolism of GLP-1 nor for its effects on the endocrine pancreas. Glucagon is secreted in the A cells of the islets of Langerhans. GLP-1, GLP-2, oxyntomodulin and glicentin are secreted from enteroendocrine cells throughout the gastrointestinal tract. GLP-1 and GLP-2 are also secreted in selected neurons in the brain.

It localises to the secreted. In terms of biological role, plays a key role in glucose metabolism and homeostasis. Regulates blood glucose by increasing gluconeogenesis and decreasing glycolysis. A counterregulatory hormone of insulin, raises plasma glucose levels in response to insulin-induced hypoglycemia. Plays an important role in initiating and maintaining hyperglycemic conditions in diabetes. Its function is as follows. Potent stimulator of glucose-dependent insulin release. Also stimulates insulin release in response to IL6. Plays important roles on gastric motility and the suppression of plasma glucagon levels. May be involved in the suppression of satiety and stimulation of glucose disposal in peripheral tissues, independent of the actions of insulin. Has growth-promoting activities on intestinal epithelium. May also regulate the hypothalamic pituitary axis (HPA) via effects on LH, TSH, CRH, oxytocin, and vasopressin secretion. Increases islet mass through stimulation of islet neogenesis and pancreatic beta cell proliferation. Inhibits beta cell apoptosis. Stimulates intestinal growth and up-regulates villus height in the small intestine, concomitant with increased crypt cell proliferation and decreased enterocyte apoptosis. The gastrointestinal tract, from the stomach to the colon is the principal target for GLP-2 action. Plays a key role in nutrient homeostasis, enhancing nutrient assimilation through enhanced gastrointestinal function, as well as increasing nutrient disposal. Stimulates intestinal glucose transport and decreases mucosal permeability. Functionally, significantly reduces food intake. Inhibits gastric emptying in humans. Suppression of gastric emptying may lead to increased gastric distension, which may contribute to satiety by causing a sensation of fullness. In terms of biological role, may modulate gastric acid secretion and the gastro-pyloro-duodenal activity. May play an important role in intestinal mucosal growth in the early period of life. The chain is Pro-glucagon (GCG) from Octodon degus (Degu).